Consider the following 254-residue polypeptide: K88 minor fimbrial subunit FaeI (254 aa).

Residues methionine 1–alanine 20 form the signal peptide.

The protein belongs to the fimbrial K88 protein family.

It is found in the fimbrium. In terms of biological role, K88 minor fimbrial subunit, plays an essential role in the biogenesis of the K88 fimbriae. Fimbriae (also called pili), are polar filaments radiating from the surface of the bacterium to a length of 0.5-1.5 micrometers and numbering 100-300 per cell. They enable bacteria to colonize the epithelium of specific host organs. This chain is K88 minor fimbrial subunit FaeI (faeI), found in Escherichia coli.